We begin with the raw amino-acid sequence, 67 residues long: Conotoxin TsMMSK-011 (67 aa).

The signal sequence occupies residues 1–22; it reads MMSKLGVLLTICLLLFPLTVLP. The propeptide occupies 23 to 50; sequence MDGDQPADLPALRTQDIATDQSPWFDPV. Disulfide bonds link Cys53-Cys65, Cys54-Cys61, and Cys58-Cys64. Position 63 is a 4-hydroxyproline (Pro63).

It belongs to the conotoxin M superfamily. In terms of tissue distribution, expressed by the venom duct.

The protein localises to the secreted. In Conus tessulatus (Tessellate cone), this protein is Conotoxin TsMMSK-011.